The following is a 211-amino-acid chain: Endonuclease V (211 aa).

Asp31 and Glu95 together coordinate Mg(2+). A disordered region spans residues Ile182–Asn211.

This sequence belongs to the endonuclease V family. The cofactor is Mg(2+).

It localises to the cytoplasm. The catalysed reaction is Endonucleolytic cleavage at apurinic or apyrimidinic sites to products with a 5'-phosphate.. Its function is as follows. DNA repair enzyme involved in the repair of deaminated bases. Selectively cleaves double-stranded DNA at the second phosphodiester bond 3' to a deoxyinosine leaving behind the intact lesion on the nicked DNA. The protein is Endonuclease V of Pyrococcus horikoshii (strain ATCC 700860 / DSM 12428 / JCM 9974 / NBRC 100139 / OT-3).